Reading from the N-terminus, the 457-residue chain is MDHLPIFCQLRDRDCLIVGGGDVAERKARLLLEAGARLTINALTFIPQFTVWANEGMLTLVEGPFDETLLDSCWLAIAATDDDTVNQRVSDAAESRRIFCNVVDAPKAASFIMPSIIDRSPLMVAVSSGGTSPVLARLLREKLESLLPQHLGQVARYAGQLRARVKKQFATMGERRRFWEKFFVNDRLAQSLANADEKAVNATTERLFSEPLDHRGEVVLVGAGPGDAGLLTLKGLQQIQQADIVVYDRLVSDDIMNLVRRDADRVFVGKRAGYHCVPQEEINQILLREAQKGKRVVRLKGGDPFIFGRGGEELETLCHAGIPFSVVPGITAASGCSAYSGIPLTHRDYAQSVRLVTGHLKTGGELDWENLAAEKQTLVFYMGLNQAATIQEKLIAFGMQADMPVALVENGTSVKQRVVHGVLTQLGELAQQVESPALIIVGRVVGLRDKLNWFSNY.

The tract at residues 1 to 204 (MDHLPIFCQL…ADEKAVNATT (204 aa)) is precorrin-2 dehydrogenase /sirohydrochlorin ferrochelatase. NAD(+) contacts are provided by residues 22–23 (DV) and 43–44 (LT). Residue S128 is modified to Phosphoserine. The interval 216-457 (GEVVLVGAGP…RDKLNWFSNY (242 aa)) is uroporphyrinogen-III C-methyltransferase. P225 is an S-adenosyl-L-methionine binding site. Catalysis depends on D248, which acts as the Proton acceptor. The active-site Proton donor is K270. Residues 301-303 (GGD), I306, 331-332 (TA), M382, and G411 contribute to the S-adenosyl-L-methionine site.

It in the N-terminal section; belongs to the precorrin-2 dehydrogenase / sirohydrochlorin ferrochelatase family. The protein in the C-terminal section; belongs to the precorrin methyltransferase family.

It catalyses the reaction uroporphyrinogen III + 2 S-adenosyl-L-methionine = precorrin-2 + 2 S-adenosyl-L-homocysteine + H(+). The catalysed reaction is precorrin-2 + NAD(+) = sirohydrochlorin + NADH + 2 H(+). It carries out the reaction siroheme + 2 H(+) = sirohydrochlorin + Fe(2+). It functions in the pathway cofactor biosynthesis; adenosylcobalamin biosynthesis; precorrin-2 from uroporphyrinogen III: step 1/1. Its pathway is cofactor biosynthesis; adenosylcobalamin biosynthesis; sirohydrochlorin from precorrin-2: step 1/1. It participates in porphyrin-containing compound metabolism; siroheme biosynthesis; precorrin-2 from uroporphyrinogen III: step 1/1. The protein operates within porphyrin-containing compound metabolism; siroheme biosynthesis; siroheme from sirohydrochlorin: step 1/1. It functions in the pathway porphyrin-containing compound metabolism; siroheme biosynthesis; sirohydrochlorin from precorrin-2: step 1/1. Functionally, multifunctional enzyme that catalyzes the SAM-dependent methylations of uroporphyrinogen III at position C-2 and C-7 to form precorrin-2 via precorrin-1. Then it catalyzes the NAD-dependent ring dehydrogenation of precorrin-2 to yield sirohydrochlorin. Finally, it catalyzes the ferrochelation of sirohydrochlorin to yield siroheme. This Salmonella heidelberg (strain SL476) protein is Siroheme synthase.